The sequence spans 428 residues: Gamma-glutamyl phosphate reductase (428 aa).

This sequence belongs to the gamma-glutamyl phosphate reductase family.

The protein resides in the cytoplasm. It carries out the reaction L-glutamate 5-semialdehyde + phosphate + NADP(+) = L-glutamyl 5-phosphate + NADPH + H(+). The protein operates within amino-acid biosynthesis; L-proline biosynthesis; L-glutamate 5-semialdehyde from L-glutamate: step 2/2. Its function is as follows. Catalyzes the NADPH-dependent reduction of L-glutamate 5-phosphate into L-glutamate 5-semialdehyde and phosphate. The product spontaneously undergoes cyclization to form 1-pyrroline-5-carboxylate. The polypeptide is Gamma-glutamyl phosphate reductase (Clostridium tetani (strain Massachusetts / E88)).